The chain runs to 89 residues: Large ribosomal subunit protein bL31B (89 aa).

Belongs to the bacterial ribosomal protein bL31 family. Type B subfamily. Part of the 50S ribosomal subunit.

The chain is Large ribosomal subunit protein bL31B from Pseudomonas fluorescens (strain ATCC BAA-477 / NRRL B-23932 / Pf-5).